A 329-amino-acid chain; its full sequence is uncharacterized protein (329 aa).

A signal peptide spans Met-1 to Ala-22.

This is an uncharacterized protein from Arabidopsis thaliana (Mouse-ear cress).